The chain runs to 295 residues: Glycine N-phenylacetyltransferase (295 aa).

Position 43 is an N6-acetyllysine (Lys-43). At Lys-48 the chain carries N6-acetyllysine; alternate. Lys-48 is subject to N6-succinyllysine; alternate. Lys-80 carries the N6-acetyllysine modification. Lys-182 is modified (N6-acetyllysine; alternate). Lys-182 carries the post-translational modification N6-succinyllysine; alternate.

The protein belongs to the glycine N-acyltransferase family.

The protein resides in the mitochondrion. It carries out the reaction phenylacetyl-CoA + glycine = phenylacetylglycine + CoA + H(+). Mitochondrial acyltransferase which transfers the acyl group to the N-terminus of glycine. Can conjugate a multitude of substrates to form a variety of N-acylglycines. Catalyzes the conjugation of arylacetic acids with glycine but does not have activity towards any alkyl-CoA. The sequence is that of Glycine N-phenylacetyltransferase from Bos taurus (Bovine).